The sequence spans 125 residues: Small ribosomal subunit protein uS13 (125 aa).

The tract at residues 95–125 is disordered; it reads GLPVNGQRTRTNARTRKGGKKTVANKKKVTK. Positions 105 to 125 are enriched in basic residues; the sequence is TNARTRKGGKKTVANKKKVTK.

This sequence belongs to the universal ribosomal protein uS13 family. Part of the 30S ribosomal subunit. Forms a loose heterodimer with protein S19. Forms two bridges to the 50S subunit in the 70S ribosome.

Functionally, located at the top of the head of the 30S subunit, it contacts several helices of the 16S rRNA. In the 70S ribosome it contacts the 23S rRNA (bridge B1a) and protein L5 of the 50S subunit (bridge B1b), connecting the 2 subunits; these bridges are implicated in subunit movement. Contacts the tRNAs in the A and P-sites. In Leptospira borgpetersenii serovar Hardjo-bovis (strain L550), this protein is Small ribosomal subunit protein uS13.